The sequence spans 2959 residues: uncharacterized protein (2959 aa).

The protein localises to the virion. This is an uncharacterized protein from Acanthamoeba polyphaga mimivirus (APMV).